Here is a 91-residue protein sequence, read N- to C-terminus: DNA-binding protein HU (91 aa).

Belongs to the bacterial histone-like protein family.

Histone-like DNA-binding protein which is capable of wrapping DNA to stabilize it, and thus to prevent its denaturation under extreme environmental conditions. Also seems to act as a fortuitous virulence factor in delayed sequelae by binding to heparan sulfate-proteoglycans in the extracellular matrix of target organs and acting as a nidus for in situ immune complex formation. This chain is DNA-binding protein HU (hup), found in Streptococcus gordonii.